Reading from the N-terminus, the 206-residue chain is Probable 5-formyltetrahydrofolate cyclo-ligase (206 aa).

Residues 8–12 (KSELR) and R12 each bind ATP. Substrate is bound by residues V54, E59, and 146-150 (HGKGY). 143 to 151 (RCGHGKGYY) contributes to the ATP binding site. Residues D152 and D188 each contribute to the Mg(2+) site.

Belongs to the 5-formyltetrahydrofolate cyclo-ligase family. Monomer. Mg(2+) is required as a cofactor.

It localises to the cytoplasm. It catalyses the reaction (6S)-5-formyl-5,6,7,8-tetrahydrofolate + ATP = (6R)-5,10-methenyltetrahydrofolate + ADP + phosphate. In terms of biological role, contributes to tetrahydrofolate metabolism. Helps regulate carbon flow through the folate-dependent one-carbon metabolic network that supplies carbon for the biosynthesis of purines, thymidine and amino acids. Catalyzes the irreversible conversion of 5-formyltetrahydrofolate (5-CHO-H(4)PteGlu) to yield 5,10-methenyltetrahydrofolate. This is Probable 5-formyltetrahydrofolate cyclo-ligase from Caenorhabditis elegans.